Here is an 846-residue protein sequence, read N- to C-terminus: MKKQFNRMKQLANQTVGRAEKTEVLSEDLLQIERRLDTVRSMCHHSHKRLIACFQGQHGTDAERRHKKLPLTALAQNMQEASAQLEESLLGKMLETCGDAENQLALELSQHEVFVEKEIMDPLYGIAEVEIPNIQKQRKQLARLVLDWDSVRARWNQAHKSSGTNFQGLPSKIDTLKEEMDEAGNKVEQCKDQLAADMYNFMAKEGEYGKFFVTLLEAQADYHRKALAVLEKALPEMRAHQDKWAEKPAFGTPLEEHLKRSGREIALPIEACVMLLLETGMKEEGLFRIGAGASKLKKLKAALDCSTSHLDEFYSDPHAVAGALKSYLRELPEPLMTFSLYEEWTQVASVQDQDKKLQYLWTTCQKLPPQNFVNFRYLIKFLAKLAQTSDVNKMTPSNIAIVLGPNLLWAKQEGTLAEIAAATSVHVVAVIEPIIQHADWFFPGEVEFNVSEAFVPLATPNSNHSSHTGNDSDSGTLERKRPASMAVMEGDLVKKESFGVKLMDFQAHRRGGTLNRKHIAPAFQPPLPPTDGNALAPAGPEPPSQSSRADSSSGGGPVFSSTGILEQGLSPGDSSPPKPKDSVSAAVPAAGRNSNQMTTVPNQAQTGGNSHQLSVSTPHSAAGPSPHTLRRAVKKPAPAPPKPGNLPPGHPGGQSSPGTGTSPKPSARSPSPPQQQQQQQQQQQQQQQQQTPGMRRCSSSLPPIQAPSHPPPQPPTQPRLGEQGPEPGPTPPQTPTPPSTPPLAKQNPSQSETTQLHGTLPRPRPVPKPRNRPSVPPPPHPPGTHTVDGGLTSSVPTASRIVTDTNSRVSESLRSIFPEIHSDLASKEVPGHILLDIDNDTESTAL.

One can recognise a BAR domain in the interval 14-246 (QTVGRAEKTE…MRAHQDKWAE (233 aa)). The Rho-GAP domain maps to 252-442 (TPLEEHLKRS…PIIQHADWFF (191 aa)). The segment covering 459 to 475 (TPNSNHSSHTGNDSDSG) has biased composition (polar residues). The interval 459–482 (TPNSNHSSHTGNDSDSGTLERKRP) is disordered. Ser-484 and Ser-575 each carry phosphoserine. A disordered region spans residues 519-807 (IAPAFQPPLP…ASRIVTDTNS (289 aa)). Residues 592–619 (RNSNQMTTVPNQAQTGGNSHQLSVSTPH) are compositionally biased toward polar residues. Residues 637–650 (APAPPKPGNLPPGH) show a composition bias toward pro residues. The span at 653–690 (GQSSPGTGTSPKPSARSPSPPQQQQQQQQQQQQQQQQQ) shows a compositional bias: low complexity. Residues Ser-698 and Ser-700 each carry the phosphoserine modification. 2 stretches are compositionally biased toward pro residues: residues 704–717 (IQAPSHPPPQPPTQ) and 726–741 (EPGPTPPQTPTPPSTP). Residues Thr-730, Thr-734, and Thr-736 each carry the phosphothreonine modification. Residues 730–743 (TPPQTPTPPSTPPL) carry the SH3-binding motif. At Ser-739 the chain carries Phosphoserine. Residue Thr-740 is modified to Phosphothreonine. Residues 746 to 757 (QNPSQSETTQLH) show a composition bias toward polar residues. Residues 772–782 (RPSVPPPPHPP) are compositionally biased toward pro residues. Polar residues predominate over residues 791–807 (LTSSVPTASRIVTDTNS).

As to quaternary structure, component of a complex whose core is composed of ARHGAP17, AMOT, PALS1, PATJ and PARD3/PAR3. Interacts with NHERF1, FNBP1, TRIP10, CAPZA (CAPZA1, CAPZA2 or CAPZA3), CAPZB, CD2AP and SH3KBP1/CIN85.

It localises to the membrane. It is found in the cytoplasm. The protein localises to the cell junction. The protein resides in the tight junction. Functionally, rho GTPase-activating protein involved in the maintenance of tight junction by regulating the activity of CDC42, thereby playing a central role in apical polarity of epithelial cells. Specifically acts as a GTPase activator for the CDC42 GTPase by converting it to an inactive GDP-bound state. The complex formed with AMOT acts by regulating the uptake of polarity proteins at tight junctions, possibly by deciding whether tight junction transmembrane proteins are recycled back to the plasma membrane or sent elsewhere. Participates in the Ca(2+)-dependent regulation of exocytosis, possibly by catalyzing GTPase activity of Rho family proteins and by inducing the reorganization of the cortical actin filaments. Acts as a GTPase activator in vitro for RAC1. The protein is Rho GTPase-activating protein 17 (Arhgap17) of Mus musculus (Mouse).